The primary structure comprises 129 residues: Glycine cleavage system H protein (129 aa).

The 83-residue stretch at 24–106 folds into the Lipoyl-binding domain; it reads TFTVGISEHA…YGDGWLFRIK (83 aa). Lys-65 is subject to N6-lipoyllysine.

Belongs to the GcvH family. The glycine cleavage system is composed of four proteins: P, T, L and H. Requires (R)-lipoate as cofactor.

In terms of biological role, the glycine cleavage system catalyzes the degradation of glycine. The H protein shuttles the methylamine group of glycine from the P protein to the T protein. The sequence is that of Glycine cleavage system H protein from Idiomarina loihiensis (strain ATCC BAA-735 / DSM 15497 / L2-TR).